The sequence spans 429 residues: Histidine--tRNA ligase (429 aa).

This sequence belongs to the class-II aminoacyl-tRNA synthetase family. Homodimer.

The protein localises to the cytoplasm. It carries out the reaction tRNA(His) + L-histidine + ATP = L-histidyl-tRNA(His) + AMP + diphosphate + H(+). The sequence is that of Histidine--tRNA ligase from Dechloromonas aromatica (strain RCB).